Consider the following 348-residue polypeptide: GMP reductase (348 aa).

108–131 (ADFQKTKDIMALSDELIFICVDIA) provides a ligand contact to NADP(+). 2 residues coordinate K(+): Gly-181 and Gly-183. The Thioimidate intermediate role is filled by Cys-186. 216–239 (IIGDGGCSCAGDVSKAFGGGADFV) contributes to the NADP(+) binding site.

Belongs to the IMPDH/GMPR family. GuaC type 1 subfamily. In terms of assembly, homotetramer.

The enzyme catalyses IMP + NH4(+) + NADP(+) = GMP + NADPH + 2 H(+). Catalyzes the irreversible NADPH-dependent deamination of GMP to IMP. It functions in the conversion of nucleobase, nucleoside and nucleotide derivatives of G to A nucleotides, and in maintaining the intracellular balance of A and G nucleotides. In Vibrio parahaemolyticus serotype O3:K6 (strain RIMD 2210633), this protein is GMP reductase.